We begin with the raw amino-acid sequence, 758 residues long: MQNWETTATTNYEQHNAWYNSMFAANIKQEPGHHLDGNSVASSPRQSPIPSTNHLEQFLKQQQQQLQQQPMDTLCAMTPSPSQNDQNSLQHYDANLQQQLLQQQQYQQHFQAAQQQHHHHHHLMGGFNPLTPPGLPNPMQHFYGGNLRPSPQPTPTSASTIAPVAVATGSSEKLQALTPPMDVTPPKSPAKSSQSNIEPEKEHDQMSNSSEDMKYMAESEDDDTNIRMPIYNSHGKMKNYKCKTCGVVAITKVDFWAHTRTHMKPDKILQCPKCPFVTEFKHHLEYHIRKHKNQKPFQCDKCSYTCVNKSMLNSHRKSHSSVYQYRCADCDYATKYCHSFKLHLRKYGHKPGMVLDEDGTPNPSLVIDVYGTRRGPKSKNGGPIASGGSGSGSRKSNVAAVAPQQQQSQPAQPVATSQLSAALQGFPLVQGNSAPPAASPVLPLPASPAKSVASVEQTPSLPSPANLLPPLASLLQQNRNMAFFPYWNLNLQMLAAQQQAAVLAQLSPRMREQLQQQNQQQSDNEEEEQDDEYERKSVDSAMDLSQGTPVKEDEQQQQPQQPLAMNLKVEEEATPLMSSSNASRRKGRVLKLDTLLQLRSEAMTSPEQLKVPSTPMPTASSPIAGRKPMPEEHCSGTSSADESMETAHVPQANTSASSTASSSGNSSNASSNSNGNSSSNSSSNGTTSAVAAPPSGTPAAAGAIYECKYCDIFFKDAVLYTIHMGYHSCDDVFKCNMCGEKCDGPVGLFVHMARNAHS.

Disordered stretches follow at residues 30–51 (EPGH…PIPS) and 172–214 (EKLQ…EDMK). The span at 39–51 (SVASSPRQSPIPS) shows a compositional bias: polar residues. A Phosphothreonine modification is found at threonine 178. 4 positions are modified to phosphoserine: serine 188, serine 207, serine 209, and serine 210. Residues 198–214 (EPEKEHDQMSNSSEDMK) show a composition bias toward basic and acidic residues. 4 consecutive C2H2-type zinc fingers follow at residues 240–262 (YKCK…TRTH), 269–291 (LQCP…IRKH), 297–319 (FQCD…RKSH), and 325–349 (YRCA…KYGH). Disordered stretches follow at residues 365–416 (LVID…PVAT) and 513–536 (QLQQ…YERK). 2 stretches are compositionally biased toward low complexity: residues 398–415 (VAAV…QPVA) and 513–522 (QLQQQNQQQS). Positions 523 to 532 (DNEEEEQDDE) are enriched in acidic residues. Serine 537 and serine 540 each carry phosphoserine. A disordered region spans residues 603-695 (MTSPEQLKVP…TTSAVAAPPS (93 aa)). A compositionally biased stretch (low complexity) spans 652-695 (ANTSASSTASSSGNSSNASSNSNGNSSSNSSSNGTTSAVAAPPS). 2 consecutive C2H2-type zinc fingers follow at residues 705–727 (YECK…MGYH) and 733–757 (FKCN…RNAH).

This sequence belongs to the hunchback C2H2-type zinc-finger protein family. In embryo, expression of maternal transcript is highest in anterior region. Zygotic transcript is expressed in anterior region until the beginning of gastrulation and in posterior region until early gastrulation. After this, it is expressed in developing nervous system.

It localises to the nucleus. Its function is as follows. Gap class segmentation protein that controls development of head structures. In Drosophila melanogaster (Fruit fly), this protein is Protein hunchback.